The sequence spans 524 residues: Glucose-6-phosphate isomerase (524 aa).

Residue Glu346 is the Proton donor of the active site. Residues His377 and Lys492 contribute to the active site.

It belongs to the GPI family.

It localises to the cytoplasm. The catalysed reaction is alpha-D-glucose 6-phosphate = beta-D-fructose 6-phosphate. Its pathway is carbohydrate biosynthesis; gluconeogenesis. It participates in carbohydrate degradation; glycolysis; D-glyceraldehyde 3-phosphate and glycerone phosphate from D-glucose: step 2/4. Catalyzes the reversible isomerization of glucose-6-phosphate to fructose-6-phosphate. The chain is Glucose-6-phosphate isomerase from Chlamydia trachomatis serovar A (strain ATCC VR-571B / DSM 19440 / HAR-13).